The primary structure comprises 503 residues: Glucosaminyl-phosphatidylinositol-acyltransferase PIGW (503 aa).

Over 1–21 (MSQKQMKEAFVSNQNGTSVLE) the chain is Lumenal. A glycan (N-linked (GlcNAc...) asparagine) is linked at Asn15. Residues 22–42 (ITEGLCLPALCILCRGLLIIL) traverse the membrane as a helical segment. The Cytoplasmic segment spans residues 43-56 (SQQLCSSLHNSRTR). A helical membrane pass occupies residues 57–75 (FLVDFAFLIVPLVTTLTIF). Residues 76-78 (SSF) lie on the Lumenal side of the membrane. Residues 79–98 (VLLEYLVAIILGAGLLYEIY) form a helical membrane-spanning segment. The Cytoplasmic segment spans residues 99-131 (CRRTCYARMPFQKICEKFLKVSLESEHIPAISC). Residues 132–152 (FRVVNSAFTAVAILAVDFPLF) form a helical membrane-spanning segment. Over 153-160 (PRRYAKTE) the chain is Lumenal. A helical membrane pass occupies residues 161–181 (LYGTGAMDYGVGGFIFGSAMV). The Cytoplasmic portion of the chain corresponds to 182-201 (SPEVRRKYTKGSRFCYLTKS). A helical transmembrane segment spans residues 202-222 (LYSLWPLVFLGVGRLVAIKSV). The Lumenal portion of the chain corresponds to 223 to 236 (DYQEHLTEYGVHWN). Residues 237–257 (FFFTLIAVKLITSLLLLICPL) traverse the membrane as a helical segment. Topologically, residues 258 to 259 (NR) are cytoplasmic. Residues 260–280 (SWVVAISIAALYQLALDFTPL) traverse the membrane as a helical segment. The Lumenal segment spans residues 281–304 (KSLILYGTDGSGTRVGLLNANREG). Residues 305 to 325 (IISVLGYVAVHMAGVQTGLYV) form a helical membrane-spanning segment. The Cytoplasmic portion of the chain corresponds to 326–337 (LKKRSHIKDWIK). The helical transmembrane segment at 338 to 358 (VACCILLTAIGLFISLYIVQV) threads the bilayer. Topologically, residues 359-369 (NVEVASRRMAN) are lumenal. Residues 370–390 (LAFCIWIVASCLILLSSLLLG) traverse the membrane as a helical segment. Topologically, residues 391–447 (DIILSFAKFVIKEAAVPCSWKLIQSPTANKKHLESIVFDAKRKEPTLCLITAMNRNQ) are cytoplasmic. At Ser415 the chain carries Phosphoserine. A helical transmembrane segment spans residues 448–468 (LLFFLLSNVTTGLVNLSIDTL). Over 469–472 (HSST) the chain is Lumenal. A helical transmembrane segment spans residues 473 to 493 (PWALCLLNLYMFTNCLIIYVL). At 494–503 (HLQDKTIKFW) the chain is on the cytoplasmic side.

This sequence belongs to the PIGW family.

It localises to the endoplasmic reticulum membrane. It participates in glycolipid biosynthesis; glycosylphosphatidylinositol-anchor biosynthesis. Acyltransferase that catalyzes the acyl transfer from an acyl-CoA at the 2-OH position of the inositol ring of glucosaminyl phosphatidylinositol (GlcN-PI) to generate glucosaminyl acyl phosphatidylinositol (GlcN-(acyl)PI) and participates in the fourth step of GPI-anchor biosynthesis. Required for the transport of GPI-anchored proteins to the plasma membrane. Acetylation during GPI-anchor biosynthesis is not essential for the subsequent mannosylation and is usually removed soon after the attachment of GPIs to proteins. The chain is Glucosaminyl-phosphatidylinositol-acyltransferase PIGW from Bos taurus (Bovine).